The primary structure comprises 289 residues: D-alanine aminotransferase (289 aa).

Tyr31 is a substrate binding site. Arg50 contributes to the pyridoxal 5'-phosphate binding site. The substrate site is built by Arg99 and His101. Residue Lys147 is the Proton acceptor of the active site. An N6-(pyridoxal phosphate)lysine modification is found at Lys147. Pyridoxal 5'-phosphate is bound at residue Glu179.

It belongs to the class-IV pyridoxal-phosphate-dependent aminotransferase family. Homodimer. It depends on pyridoxal 5'-phosphate as a cofactor.

It catalyses the reaction D-alanine + 2-oxoglutarate = D-glutamate + pyruvate. In terms of biological role, acts on the D-isomers of alanine, leucine, aspartate, glutamate, aminobutyrate, norvaline and asparagine. The enzyme transfers an amino group from a substrate D-amino acid to the pyridoxal phosphate cofactor to form pyridoxamine and an alpha-keto acid in the first half-reaction. The second half-reaction is the reverse of the first, transferring the amino group from the pyridoxamine to a second alpha-keto acid to form the product D-amino acid via a ping-pong mechanism. This is an important process in the formation of D-alanine and D-glutamate, which are essential bacterial cell wall components. The chain is D-alanine aminotransferase (dat) from Listeria innocua serovar 6a (strain ATCC BAA-680 / CLIP 11262).